Consider the following 246-residue polypeptide: 1-(5-phosphoribosyl)-5-[(5-phosphoribosylamino)methylideneamino] imidazole-4-carboxamide isomerase (246 aa).

D8 functions as the Proton acceptor in the catalytic mechanism. D131 (proton donor) is an active-site residue.

It belongs to the HisA/HisF family.

The protein resides in the cytoplasm. It catalyses the reaction 1-(5-phospho-beta-D-ribosyl)-5-[(5-phospho-beta-D-ribosylamino)methylideneamino]imidazole-4-carboxamide = 5-[(5-phospho-1-deoxy-D-ribulos-1-ylimino)methylamino]-1-(5-phospho-beta-D-ribosyl)imidazole-4-carboxamide. The protein operates within amino-acid biosynthesis; L-histidine biosynthesis; L-histidine from 5-phospho-alpha-D-ribose 1-diphosphate: step 4/9. The protein is 1-(5-phosphoribosyl)-5-[(5-phosphoribosylamino)methylideneamino] imidazole-4-carboxamide isomerase of Chromobacterium violaceum (strain ATCC 12472 / DSM 30191 / JCM 1249 / CCUG 213 / NBRC 12614 / NCIMB 9131 / NCTC 9757 / MK).